The primary structure comprises 650 residues: p-hydroxybenzoic acid efflux pump subunit AaeB (650 aa).

Transmembrane regions (helical) follow at residues 7-27 (FPIK…HLNL), 32-52 (WAVM…GGDP), 61-81 (GILR…IMIA), 87-107 (VVML…SSLI), 115-135 (LGLA…SGGL), 148-168 (EIIL…PRSI), 365-385 (LFWL…LGVI), 402-422 (FVYG…YILP), 426-446 (QSAV…GILI), 450-470 (QIGT…DNPM), and 478-498 (IDNA…ILLI).

It belongs to the aromatic acid exporter ArAE (TC 2.A.85) family.

It localises to the cell inner membrane. Forms an efflux pump with AaeA. Could function as a metabolic relief valve, allowing to eliminate certain compounds when they accumulate to high levels in the cell. The sequence is that of p-hydroxybenzoic acid efflux pump subunit AaeB from Pantoea ananatis (strain LMG 20103).